We begin with the raw amino-acid sequence, 101 residues long: Iron-sulfur cluster assembly protein CyaY (101 aa).

The protein belongs to the frataxin family.

Involved in iron-sulfur (Fe-S) cluster assembly. May act as a regulator of Fe-S biogenesis. This Rickettsia felis (strain ATCC VR-1525 / URRWXCal2) (Rickettsia azadi) protein is Iron-sulfur cluster assembly protein CyaY.